A 264-amino-acid polypeptide reads, in one-letter code: 2',3'-cyclic-nucleotide 2'-phosphodiesterase (264 aa).

Residues Asp8, Glu39, Asn40, and Asn67 each coordinate Fe cation. His68 serves as the catalytic Proton donor. Fe cation-binding residues include His150, His175, and His177.

This sequence belongs to the YmdB-like family. In terms of assembly, homodimer. It depends on Fe(2+) as a cofactor. The cofactor is Fe(3+).

The protein localises to the cytoplasm. The catalysed reaction is a nucleoside 2',3'-cyclic phosphate + H2O = a nucleoside 3'-phosphate + H(+). In terms of biological role, plays a central, regulatory role in the late adaptive responses and affects the levels of many genes. May act via regulation of cAMP levels. Decreases the expression of motility genes and induces genes involved in biofilm formation, by controlling the expression of SlrR. Required for formation of intercellular nanotubes that bridge neighboring cells to allow molecular exchange. Plays a key role in directing the early stages of colony development. In vitro, has a metal-dependent phosphodiesterase activity against 2',3'-cAMP and 2',3'-cGMP. Also has 3',5'-cyclic-nucleotide phosphodiesterase activity, but cannot use cyclic di-AMP or cyclic di-GMP, and does not have phosphatase activity. The chain is 2',3'-cyclic-nucleotide 2'-phosphodiesterase (ymdB) from Bacillus subtilis (strain 168).